A 393-amino-acid chain; its full sequence is tRNA(Met) cytidine acetate ligase (393 aa).

Residues Gly81, Asn142, and Arg167 each coordinate ATP.

It belongs to the TmcAL family.

The protein localises to the cytoplasm. The catalysed reaction is cytidine(34) in elongator tRNA(Met) + acetate + ATP = N(4)-acetylcytidine(34) in elongator tRNA(Met) + AMP + diphosphate. Functionally, catalyzes the formation of N(4)-acetylcytidine (ac(4)C) at the wobble position of elongator tRNA(Met), using acetate and ATP as substrates. First activates an acetate ion to form acetyladenylate (Ac-AMP) and then transfers the acetyl group to tRNA to form ac(4)C34. This Bacillus thuringiensis (strain Al Hakam) protein is tRNA(Met) cytidine acetate ligase.